The chain runs to 318 residues: Protein-L-histidine N-pros-methyltransferase (318 aa).

Positions 1–18 are cleaved as a signal peptide; sequence MRLLAGWLCLSLASVWLA. Asparagine 35 carries an N-linked (GlcNAc...) asparagine glycan. Glutamate 174, asparagine 210, and tyrosine 295 together coordinate S-adenosyl-L-homocysteine.

It belongs to the METTL9 family.

The protein resides in the endoplasmic reticulum. Its subcellular location is the mitochondrion. It carries out the reaction L-histidyl-[protein] + S-adenosyl-L-methionine = N(pros)-methyl-L-histidyl-[protein] + S-adenosyl-L-homocysteine + H(+). Its function is as follows. Protein-histidine N-methyltransferase that specifically catalyzes 1-methylhistidine (pros-methylhistidine) methylation of target proteins. Specifically methylates the second His of proteins with a His-x-His (HxH) motif (where 'x' is preferably a small amino acid), while exploiting the first one as a recognition signature. Catalyzes methylation of target proteins such as S100A9, NDUFB3, SLC39A5, SLC39A7, ARMC6 and DNAJB12; 1-methylhistidine modification may affect the binding of zinc and other metals to its target proteins. Constitutes the main methyltransferase for the 1-methylhistidine modification in cell. The chain is Protein-L-histidine N-pros-methyltransferase from Bos taurus (Bovine).